The following is a 327-amino-acid chain: Trypsin-like protease try-5 (327 aa).

The N-terminal stretch at 1–21 (MRPRIIVFLFQVLVVIKGTKL) is a signal peptide. Residues 43-327 (AAGNTGNPTH…KFIVNFINQA (285 aa)) enclose the Peptidase S1 domain. Cysteines 73 and 89 form a disulfide. Active-site charge relay system residues include His-88 and Asp-173. Asn-207 carries an N-linked (GlcNAc...) asparagine glycan. 2 disulfide bridges follow: Cys-242–Cys-256 and Cys-266–Cys-296. The Charge relay system role is filled by Ser-270.

It belongs to the peptidase S1 family. Specifically expressed in the male gonad including the seminal vesicle, the valve region and the vas deferens.

Its subcellular location is the secreted. The protein resides in the cytoplasmic vesicle. It localises to the secretory vesicle lumen. Its activity is regulated as follows. In the male gonad, probably maintained inactive by swm-1. Serine protease which, in males, acts as a promoting signal during mating to activate sperm. The polypeptide is Trypsin-like protease try-5 (Caenorhabditis elegans).